The primary structure comprises 259 residues: Dihydroorotate dehydrogenase B (NAD(+)), electron transfer subunit (259 aa).

Residues 3–103 enclose the FAD-binding FR-type domain; that stretch reads KKQGRLTIVK…LGPLGQGFPL (101 aa). FAD contacts are provided by residues 54 to 57, 71 to 73, and 78 to 79; these read RPIS, IYR, and GT. 4 residues coordinate [2Fe-2S] cluster: Cys-222, Cys-227, Cys-230, and Cys-246.

The protein belongs to the PyrK family. As to quaternary structure, heterotetramer of 2 PyrK and 2 PyrD type B subunits. It depends on [2Fe-2S] cluster as a cofactor. FAD is required as a cofactor.

Its pathway is pyrimidine metabolism; UMP biosynthesis via de novo pathway; orotate from (S)-dihydroorotate (NAD(+) route): step 1/1. In terms of biological role, responsible for channeling the electrons from the oxidation of dihydroorotate from the FMN redox center in the PyrD type B subunit to the ultimate electron acceptor NAD(+). This is Dihydroorotate dehydrogenase B (NAD(+)), electron transfer subunit from Shouchella clausii (strain KSM-K16) (Alkalihalobacillus clausii).